The sequence spans 193 residues: Large ribosomal subunit protein uL5 (193 aa).

The protein belongs to the universal ribosomal protein uL5 family. Part of the 50S ribosomal subunit; part of the 5S rRNA/L5/L18/L25 subcomplex. Contacts the 5S rRNA and the P site tRNA. Forms a bridge to the 30S subunit in the 70S ribosome.

Its function is as follows. This is one of the proteins that bind and probably mediate the attachment of the 5S RNA into the large ribosomal subunit, where it forms part of the central protuberance. In the 70S ribosome it contacts protein S13 of the 30S subunit (bridge B1b), connecting the 2 subunits; this bridge is implicated in subunit movement. Contacts the P site tRNA; the 5S rRNA and some of its associated proteins might help stabilize positioning of ribosome-bound tRNAs. This is Large ribosomal subunit protein uL5 from Corynebacterium urealyticum (strain ATCC 43042 / DSM 7109).